A 133-amino-acid chain; its full sequence is Small ribosomal subunit protein uS8 (133 aa).

Belongs to the universal ribosomal protein uS8 family. As to quaternary structure, part of the 30S ribosomal subunit. Contacts proteins S5 and S12.

Functionally, one of the primary rRNA binding proteins, it binds directly to 16S rRNA central domain where it helps coordinate assembly of the platform of the 30S subunit. The protein is Small ribosomal subunit protein uS8 of Prochlorococcus marinus (strain AS9601).